The sequence spans 1447 residues: MHDAESTVDSLLKEIDNEMEQTKSNITQNGSEDTPHNWKLPLQEIGDDTMEMLVKHNTRSNATENSRGRSPSKMSTISNESLNLGLLRVNSELEESPAAVHQERIKNSVANGALGHANSPKVLNNLKNMAQDIDKLARDEEKPVKLSSSPLKFTLKSTQPLLSYPESPIHRSSIEIETNYDDEDEEEEDAYTCLTQSPQILHSPSRIPITNAVSINKLNLDFTLNPNESDKSLVSDTSVDSTGRELDTKTIPELPFCMSSTPEMTPVDEKCNLPSKLLNTSNNSHSDSRSPTASVEDLNISTNLPGADSSQNNPVTTDADALIENDVVRDLQQNMEHIDDAFDEKKVLDEGCSNEPVTFLGENDTRSIVYSNKGTNANVQEFSQEDSLAHSEPNFKDLNATSDDVWNEDKETDANISTSTKSEESYIADYKVTRQEDWDTKKLHQESEHANEQPAIIPQKDSSEETFTELNNESEFQRNSKDGEEYRIVQHEESLYGQRTKSSEENIINGSEIGVDHGEADEVNEPLAKTSAEEHDLSSSCEDQSVSEARNKDSIEEKEVETKDENIETEKDESEYHKVEENEESEHVPLLPPLPRWEEIQFNEPFIDENDTSNDSIDLTRSMKPSDYISIWHIQEEEIKSNSPESIANSQFSQQSSITTASTVDSKKDNGSTSFKFKPRIVSRSRIYNPKSRVSSLNYYDNEDYILSNSEWNALDPMRRNTLISKRIQDNIRTQKGHAPLIRPSVMKLNGEDSGFQNHFLEVEQPQEHENIPLSTHLSEQDITTNVGLDEQKLPTNTQDEAEISIREIESAGDITFNRGDLLSLSFDEELGQDFANFLDALDHDSTSFNHGPDDSSSFQRDSSKKSFNSLWESSYELKPPPSIRKQPIAPDVLQKLLESDTKDDADLEKIREERITEPRTGLGIGMLKTPVKDVSIALAASIKGYEASFSDTDSRPEGMNNSDAITLNMFDDFEEDKMTPSTPVRSISPIKRHVSSPFKVVKAGNKQENNEINIKAEEEIEPMTQQETDGLKQDIPPLLAQTKDNVEAKEETITQLEEPQDVEQEFPDMGTLYLSIKAISTLALYGTKSHRATYAIVFDNGENVVQTPWESLPYDGNIRINKEFELPIDFKGKAETSSASSERDSYKKCVITLKCKYEKPRHELVEIVDKVPVGKSFFGKTKYKFEKKYVQKKPKQDEWDYLFAQDGSFARCEIEINEEFLKNVAFNTSHMHYNMINKWSRIADKIHGSKRLYELPRKAPHKVASLDVEACFLERTSAFEQFPKQFSLVNKIVSKYKLQQNIYKEGYLLQDGGDLKGKIENRFFKLHGSQLSGYHEISRKAKIDINLLKVTKVLRNEDIQADNGGQRNFTDWVLFNECFQLVFDDGERITFNAECSNEEKSDWYNKLQEVVELNVFHQPWVKKYCEKLAEEEKTRTTGHNLKQDFN.

Over residues 1 to 16 (MHDAESTVDSLLKEID) the composition is skewed to basic and acidic residues. Disordered regions lie at residues 1-37 (MHDA…TPHN) and 57-76 (NTRS…KMST). Ser10 is subject to Phosphoserine. Composition is skewed to polar residues over residues 22-32 (TKSNITQNGSE) and 59-76 (RSNA…KMST). Residues Ser78, Ser81, Ser91, Ser96, and Ser167 each carry the phosphoserine modification. The interval 272–316 (NLPSKLLNTSNNSHSDSRSPTASVEDLNISTNLPGADSSQNNPVT) is disordered. A compositionally biased stretch (polar residues) spans 277–316 (LLNTSNNSHSDSRSPTASVEDLNISTNLPGADSSQNNPVT). Thr365 bears the Phosphothreonine mark. Ser367 carries the post-translational modification Phosphoserine. The tract at residues 444–588 (HQESEHANEQ…VEENEESEHV (145 aa)) is disordered. The span at 475–494 (EFQRNSKDGEEYRIVQHEES) shows a compositional bias: basic and acidic residues. A compositionally biased stretch (polar residues) spans 497-509 (GQRTKSSEENIIN). Residue Ser511 is modified to Phosphoserine. Residues 538–548 (SSSCEDQSVSE) are compositionally biased toward polar residues. A compositionally biased stretch (basic and acidic residues) spans 549–580 (ARNKDSIEEKEVETKDENIETEKDESEYHKVE). The residue at position 616 (Ser616) is a Phosphoserine. Residues 649-664 (NSQFSQQSSITTASTV) are compositionally biased toward polar residues. Residues 649–672 (NSQFSQQSSITTASTVDSKKDNGS) are disordered. Positions 768 to 879 (EHENIPLSTH…SLWESSYELK (112 aa)) are interaction with IQG1. Phosphoserine is present on residues Ser805 and Ser811. The PH domain occupies 1302 to 1413 (NIYKEGYLLQ…WYNKLQEVVE (112 aa)).

The protein belongs to the BUD4 family. Interacts with AXL1, IQG1 and SEC3. Post-translationally, phosphorylated by CDC28.

Its subcellular location is the bud neck. Its function is as follows. Required for establishment of the axial budding pattern in haploid cells. Cooperates with other bud site selection proteins to recognize a spatial landmark during mitosis and they subsequently become a landmark for downstream polarity establishment factors that coordinate axial budding and cytokinesis. Involved in the septin organization at the bud neck. In Saccharomyces cerevisiae (strain YJM789) (Baker's yeast), this protein is Bud site selection protein 4 (BUD4).